A 155-amino-acid chain; its full sequence is Transcriptional regulator MraZ (155 aa).

SpoVT-AbrB domains lie at 7 to 54 (TYEC…PMEE) and 83 to 126 (VKTV…DKDK).

It belongs to the MraZ family. As to quaternary structure, forms oligomers.

The protein localises to the cytoplasm. It localises to the nucleoid. The sequence is that of Transcriptional regulator MraZ from Christiangramia forsetii (strain DSM 17595 / CGMCC 1.15422 / KT0803) (Gramella forsetii).